The primary structure comprises 74 residues: uncharacterized protein (74 aa).

The chain crosses the membrane as a helical span at residues 20-40; that stretch reads IYSYTLLTLLVITLICYLIHI.

The protein belongs to the asfivirus KP93L family.

The protein resides in the host membrane. This is an uncharacterized protein from African swine fever virus (isolate Tick/South Africa/Pretoriuskop Pr4/1996) (ASFV).